The following is a 606-amino-acid chain: Aspartate--tRNA(Asp/Asn) ligase (606 aa).

Glu196 serves as a coordination point for L-aspartate. An aspartate region spans residues 220-223 (QIFK). Arg242 provides a ligand contact to L-aspartate. Residues 242-244 (RDE) and Gln251 each bind ATP. His465 lines the L-aspartate pocket. An ATP-binding site is contributed by Glu499. Arg506 is a binding site for L-aspartate. 551-554 (GMDR) provides a ligand contact to ATP.

Belongs to the class-II aminoacyl-tRNA synthetase family. Type 1 subfamily. Homodimer.

The protein localises to the cytoplasm. The enzyme catalyses tRNA(Asx) + L-aspartate + ATP = L-aspartyl-tRNA(Asx) + AMP + diphosphate. Its function is as follows. Aspartyl-tRNA synthetase with relaxed tRNA specificity since it is able to aspartylate not only its cognate tRNA(Asp) but also tRNA(Asn). Reaction proceeds in two steps: L-aspartate is first activated by ATP to form Asp-AMP and then transferred to the acceptor end of tRNA(Asp/Asn). This chain is Aspartate--tRNA(Asp/Asn) ligase, found in Oleidesulfovibrio alaskensis (strain ATCC BAA-1058 / DSM 17464 / G20) (Desulfovibrio alaskensis).